A 458-amino-acid chain; its full sequence is Retinoic acid receptor alpha (458 aa).

A modulating region spans residues 1–87 (MSSKDNTCPP…PPPLPRIYKP (87 aa)). Residues 39-78 (GGLPGVQHQPPLSGYSTPSPATIETQSTSSEEIVPSPPTP) form a disordered region. Residues 52-69 (GYSTPSPATIETQSTSSE) are compositionally biased toward polar residues. 2 consecutive NR C4-type zinc fingers follow at residues 88–108 (CFVCQDKSSGYHYGVSACEGC) and 124–148 (CHRDKNCIINKVTRNRCQYCRLQKC). The nuclear receptor DNA-binding region spans 88 to 153 (CFVCQDKSSG…RLQKCFEVGM (66 aa)). The hinge stretch occupies residues 154–182 (SKESVRNDRNKKKKESPKPEAIESYILSP). An NR LBD domain is found at 183–417 (ETQDLIEKVQ…LIQEMLENSE (235 aa)). A 9aaTAD motif is present at residues 407-415 (PLIQEMLEN). The interval 419–458 (LDTLGGGASSDAPVTPVAPGSCSPSLSPSSTHSSPSTHSP) is disordered. Over residues 439 to 458 (SCSPSLSPSSTHSSPSTHSP) the composition is skewed to low complexity.

It belongs to the nuclear hormone receptor family. NR1 subfamily. Heterodimer; with an rxr molecule. Binds DNA preferentially as a rar/rxr heterodimer.

Its subcellular location is the nucleus. In terms of biological role, receptor for retinoic acid. Retinoic acid receptors bind as heterodimers to their target response elements in response to their ligands, all-trans or 9-cis retinoic acid, and regulate gene expression in various biological processes. The rar/rxr heterodimers bind to the retinoic acid response elements (RARE) composed of tandem 5'-AGGTCA-3' sites known as DR1-DR5. Required for primary neurogenesis and for anteroposterior neural patterning. This Xenopus laevis (African clawed frog) protein is Retinoic acid receptor alpha (rara).